The chain runs to 116 residues: MRYAFAAEATTCNAFWRNVDMTVTALYEVPLGVCTQDPDRWTTTPDDEAKTLCRACPRRWLCARDAVESAGAEGLWAGVVIPESGRARAFALGQLRSLAERNGYPVRDHRVSAQSA.

Cysteine 12, cysteine 53, cysteine 56, and cysteine 62 together coordinate [4Fe-4S] cluster. A 4Fe-4S Wbl-type domain is found at 33-86 (VCTQDPDRWTTTPDDEAKTLCRACPRRWLCARDAVESAGAEGLWAGVVIPESGR).

It belongs to the WhiB family. It depends on [4Fe-4S] cluster as a cofactor. In terms of processing, the Fe-S cluster can be nitrosylated by nitric oxide (NO). Upon Fe-S cluster removal intramolecular disulfide bonds are formed.

Its subcellular location is the cytoplasm. Functionally, acts as a transcriptional regulator. Probably redox-responsive. The apo- but not holo-form probably binds DNA. This chain is Probable transcriptional regulator WhiB6 (whiB6), found in Mycobacterium tuberculosis (strain CDC 1551 / Oshkosh).